The following is a 348-amino-acid chain: Small ribosomal subunit biogenesis GTPase RsgA (348 aa).

The tract at residues 1-32 (MAKQKLTQNQKRRIHSNNAKALDRHRRQTKKQ) is disordered. The CP-type G domain maps to 106-274 (KNELSRPDYY…LIDSPGIREF (169 aa)). Residues 162–165 (NKID) and 216–224 (GQSGVGKSS) contribute to the GTP site. Positions 298, 303, 305, and 311 each coordinate Zn(2+).

This sequence belongs to the TRAFAC class YlqF/YawG GTPase family. RsgA subfamily. As to quaternary structure, monomer. Associates with 30S ribosomal subunit, binds 16S rRNA. Zn(2+) is required as a cofactor.

The protein resides in the cytoplasm. Its function is as follows. One of several proteins that assist in the late maturation steps of the functional core of the 30S ribosomal subunit. Helps release RbfA from mature subunits. May play a role in the assembly of ribosomal proteins into the subunit. Circularly permuted GTPase that catalyzes slow GTP hydrolysis, GTPase activity is stimulated by the 30S ribosomal subunit. The polypeptide is Small ribosomal subunit biogenesis GTPase RsgA (Actinobacillus succinogenes (strain ATCC 55618 / DSM 22257 / CCUG 43843 / 130Z)).